The primary structure comprises 379 residues: ATP phosphoribosyltransferase regulatory subunit (379 aa).

Belongs to the class-II aminoacyl-tRNA synthetase family. HisZ subfamily. Heteromultimer composed of HisG and HisZ subunits.

It localises to the cytoplasm. The protein operates within amino-acid biosynthesis; L-histidine biosynthesis; L-histidine from 5-phospho-alpha-D-ribose 1-diphosphate: step 1/9. Its function is as follows. Required for the first step of histidine biosynthesis. May allow the feedback regulation of ATP phosphoribosyltransferase activity by histidine. This is ATP phosphoribosyltransferase regulatory subunit from Caldanaerobacter subterraneus subsp. tengcongensis (strain DSM 15242 / JCM 11007 / NBRC 100824 / MB4) (Thermoanaerobacter tengcongensis).